The chain runs to 256 residues: tRNA pseudouridine synthase A (256 aa).

The active-site Nucleophile is Asp52. Position 111 (Tyr111) interacts with substrate.

This sequence belongs to the tRNA pseudouridine synthase TruA family. As to quaternary structure, homodimer.

The catalysed reaction is uridine(38/39/40) in tRNA = pseudouridine(38/39/40) in tRNA. In terms of biological role, formation of pseudouridine at positions 38, 39 and 40 in the anticodon stem and loop of transfer RNAs. The chain is tRNA pseudouridine synthase A from Paramagnetospirillum magneticum (strain ATCC 700264 / AMB-1) (Magnetospirillum magneticum).